Here is a 527-residue protein sequence, read N- to C-terminus: Acyl-coenzyme A thioesterase 4, mitochondrial (527 aa).

The N-terminal 75 residues, 1-75 (MMTPIGIRIR…FLFDPPPIRF (75 aa)), are a transit peptide targeting the mitochondrion. HotDog ACOT-type domains are found at residues 172 to 294 (ILYN…RDSK) and 370 to 487 (KDTC…GPEA).

Belongs to the acyl coenzyme A hydrolase family. Mostly expressed at low levels in glandular trichomes (lupulin glands), and, to a lower extent, in stems, leaves, flowers and cones.

Its subcellular location is the mitochondrion. It catalyses the reaction 2-methylpropanoyl-CoA + H2O = 2-methylpropanoate + CoA + H(+). The enzyme catalyses propanoyl-CoA + H2O = propanoate + CoA + H(+). The catalysed reaction is octanoyl-CoA + H2O = octanoate + CoA + H(+). It carries out the reaction butanoyl-CoA + H2O = butanoate + CoA + H(+). It catalyses the reaction 3-methylbutanoyl-CoA + H2O = 3-methylbutanoate + CoA + H(+). The enzyme catalyses 2-methylbutanoyl-CoA + H2O = 2-methylbutanoate + CoA + H(+). In terms of biological role, acyl-CoA thioesterases are a group of enzymes that catalyze the hydrolysis of acyl-CoAs to the free fatty acid and coenzyme A (CoASH), providing the potential to regulate intracellular levels of acyl-CoAs, free fatty acids and CoASH. Active on acyl CoAs with short chains (propanoyl-CoA and butanoyl-CoA), branched short chains (2-methylpropanoyl-CoA, 2-methylbutanoyl-CoA and 3-methylbutanoyl-CoA) and medium chains (octanoyl-CoA). This Humulus lupulus (European hop) protein is Acyl-coenzyme A thioesterase 4, mitochondrial.